The chain runs to 810 residues: Phospholipase D alpha 1 (810 aa).

In terms of domain architecture, C2 spans 1-126 (MAQHLLHGTL…INGEEVDQWV (126 aa)). Position 187 (Asp-187) interacts with Ca(2+). Positions 327–366 (TMFTHHQKIVVVDSEMPSRGGSEMRRIVSFVGGIDLCDGR) constitute a PLD phosphodiesterase 1 domain. Residues His-332, Lys-334, and Asp-339 contribute to the active site. Residue His-332 participates in a 1,2-diacyl-sn-glycero-3-phosphate binding. Residues His-372 and His-406 each coordinate Ca(2+). A 1,2-diacyl-sn-glycero-3-phosphate is bound by residues Gln-522 and His-661. The 28-residue stretch at 656-683 (FMIYVHTKMMIVDDEYIIIGSANINQRS) folds into the PLD phosphodiesterase 2 domain. Residues His-661, Lys-663, and Asp-668 contribute to the active site. Glu-722 contacts Ca(2+).

This sequence belongs to the phospholipase D family. C2-PLD subfamily. In terms of assembly, interacts with GPA1. This binding inhibits PLDALPHA1 activity and is relieved by GTP. The cofactor is Ca(2+). Highly expressed in roots, stems and flowers, moderately in leaves, seedlings and siliques. Not detected in seeds.

It localises to the cytoplasm. The protein localises to the cell membrane. It is found in the mitochondrion membrane. Its subcellular location is the microsome membrane. The protein resides in the vacuole. It localises to the cytoplasmic vesicle. The protein localises to the clathrin-coated vesicle. It carries out the reaction a 1,2-diacyl-sn-glycero-3-phosphocholine + H2O = a 1,2-diacyl-sn-glycero-3-phosphate + choline + H(+). Its activity is regulated as follows. Not inhibited by neomycin. Its function is as follows. Hydrolyzes glycerol-phospholipids at the terminal phosphodiesteric bond to generate phosphatidic acids (PA). Plays an important role in various cellular processes, including phytohormone action and response to stress, characterized by acidification of the cell. Involved in wound induction of jasmonic acid. May be involved in membrane lipid remodeling. Probably involved in freezing tolerance by modulating the cold-responsive genes and accumulation of osmolytes. Can use phosphatidylcholine (PC), phosphatidylethanolamine (PE) and phosphatidylglycerol (PG) as substrates, both in presence or in absence of PIP2. Its main substrate is phosphatidylcholine. Stimulates the intrinsic GTPase activity of GPA1 upon binding. Mediates the abscisic acid effects on stomata through interaction with GPA1 and the production of phosphatidic acid that bind to ABI1. Involved in seed aging and deterioration. Involved in microtubule stabilization and salt tolerance. Involved in abscisic acid-induced stomatal closure. The protein is Phospholipase D alpha 1 of Arabidopsis thaliana (Mouse-ear cress).